Here is a 976-residue protein sequence, read N- to C-terminus: Protein PLASTID MOVEMENT IMPAIRED 1-RELATED 2 (976 aa).

Residues 81 to 229 (IAHFGQRRFD…VLNLSFDYSV (149 aa)) form the C2 NT-type domain. Positions 309–319 (KQAADSDDSGK) are enriched in basic and acidic residues. Disordered regions lie at residues 309–343 (KQAADSDDSGKGVETFQQERSGLEESNDPNTESSR) and 381–419 (NLLPKHSVDGTPKSTFSSQVISESSESKSPSAMDDSTEK). Positions 394–414 (STFSSQVISESSESKSPSAMD) are enriched in low complexity.

Its function is as follows. Seems not necessary for chloroplast and nuclear photorelocation movements. This chain is Protein PLASTID MOVEMENT IMPAIRED 1-RELATED 2, found in Arabidopsis thaliana (Mouse-ear cress).